Here is a 456-residue protein sequence, read N- to C-terminus: GTPase Der (456 aa).

EngA-type G domains follow at residues 3-167 (FTIA…PETE) and 185-360 (IRVA…AVWN). GTP-binding positions include 9-16 (GRPNVGKS), 56-60 (DTAGL), 119-122 (NKSE), 191-198 (GRPNAGKS), 238-242 (DTAGL), and 303-306 (NKWD). Residues 361-445 (RRVPTAALNR…PVRITLREKA (85 aa)) form the KH-like domain.

This sequence belongs to the TRAFAC class TrmE-Era-EngA-EngB-Septin-like GTPase superfamily. EngA (Der) GTPase family. As to quaternary structure, associates with the 50S ribosomal subunit.

Its function is as follows. GTPase that plays an essential role in the late steps of ribosome biogenesis. The chain is GTPase Der from Bradyrhizobium sp. (strain BTAi1 / ATCC BAA-1182).